The primary structure comprises 146 residues: Acidic phospholipase A2 C (146 aa).

Residues 1 to 21 form the signal peptide; the sequence is MNPAHLLILAAVCVSPLGASS. Positions 22 to 27 are excised as a propeptide; that stretch reads NRPMPL. Intrachain disulfides connect C38–C98, C53–C145, C55–C71, C70–C126, C77–C119, C87–C112, and C105–C117. Ca(2+) is bound by residues Y54, G56, and G58. Residue H74 is part of the active site. Residue D75 coordinates Ca(2+). D120 is a catalytic residue.

The protein belongs to the phospholipase A2 family. Group I subfamily. D49 sub-subfamily. Requires Ca(2+) as cofactor. As to expression, expressed by the venom gland.

The protein resides in the secreted. The enzyme catalyses a 1,2-diacyl-sn-glycero-3-phosphocholine + H2O = a 1-acyl-sn-glycero-3-phosphocholine + a fatty acid + H(+). PLA2 catalyzes the calcium-dependent hydrolysis of the 2-acyl groups in 3-sn-phosphoglycerides. The protein is Acidic phospholipase A2 C of Naja sputatrix (Malayan spitting cobra).